A 466-amino-acid chain; its full sequence is Cysteine--tRNA ligase (466 aa).

Zn(2+) is bound at residue Cys29. A 'HIGH' region motif is present at residues 31–41; sequence PTVYDFAHIGN. Zn(2+) is bound by residues Cys210, His235, and Glu239. The 'KMSKS' region motif lies at 267 to 271; the sequence is KMSKS. Lys270 provides a ligand contact to ATP.

This sequence belongs to the class-I aminoacyl-tRNA synthetase family. Monomer. It depends on Zn(2+) as a cofactor.

The protein localises to the cytoplasm. It carries out the reaction tRNA(Cys) + L-cysteine + ATP = L-cysteinyl-tRNA(Cys) + AMP + diphosphate. This Solibacter usitatus (strain Ellin6076) protein is Cysteine--tRNA ligase.